The primary structure comprises 503 residues: Arabinose import ATP-binding protein AraG (503 aa).

ABC transporter domains follow at residues 5–240 (LRFD…MVGR) and 253–497 (LGDV…LPQG). 37–44 (GENGAGKS) contributes to the ATP binding site.

It belongs to the ABC transporter superfamily. Arabinose importer (TC 3.A.1.2.2) family. The complex is composed of two ATP-binding proteins (AraG), two transmembrane proteins (AraH) and a solute-binding protein (AraF).

The protein localises to the cell inner membrane. The catalysed reaction is L-arabinose(out) + ATP + H2O = L-arabinose(in) + ADP + phosphate + H(+). In terms of biological role, part of the ABC transporter complex AraFGH involved in arabinose import. Responsible for energy coupling to the transport system. The polypeptide is Arabinose import ATP-binding protein AraG (Burkholderia pseudomallei (strain 1710b)).